The primary structure comprises 283 residues: NADPH-dependent 7-cyano-7-deazaguanine reductase (283 aa).

90-92 (IES) contacts substrate. Residue 92-93 (SK) coordinates NADPH. Catalysis depends on Cys-190, which acts as the Thioimide intermediate. Asp-197 serves as the catalytic Proton donor. Residue 229-230 (HE) coordinates substrate. Position 258 to 259 (258 to 259 (RG)) interacts with NADPH.

This sequence belongs to the GTP cyclohydrolase I family. QueF type 2 subfamily. Homodimer.

It localises to the cytoplasm. The enzyme catalyses 7-aminomethyl-7-carbaguanine + 2 NADP(+) = 7-cyano-7-deazaguanine + 2 NADPH + 3 H(+). It functions in the pathway tRNA modification; tRNA-queuosine biosynthesis. In terms of biological role, catalyzes the NADPH-dependent reduction of 7-cyano-7-deazaguanine (preQ0) to 7-aminomethyl-7-deazaguanine (preQ1). The chain is NADPH-dependent 7-cyano-7-deazaguanine reductase from Dechloromonas aromatica (strain RCB).